Consider the following 500-residue polypeptide: L-arabinose isomerase (500 aa).

Mn(2+) is bound by residues E306, E333, H349, and H448.

Belongs to the arabinose isomerase family. The cofactor is Mn(2+).

It carries out the reaction beta-L-arabinopyranose = L-ribulose. It functions in the pathway carbohydrate degradation; L-arabinose degradation via L-ribulose; D-xylulose 5-phosphate from L-arabinose (bacterial route): step 1/3. Its function is as follows. Catalyzes the conversion of L-arabinose to L-ribulose. This is L-arabinose isomerase from Shewanella baltica (strain OS223).